The following is a 250-amino-acid chain: Sperm-egg fusion protein Juno (250 aa).

A signal peptide spans 1–19 (MACWWPLLLELWTVMPTWA). 8 disulfides stabilise this stretch: C27–C55, C47–C95, C56–C99, C79–C172, C86–C143, C132–C206, C136–C186, and C149–C166. Positions 62–81 (WEAHLDVSPLYNFSLFHCGL) are important for interaction with IZUMO1. N-linked (GlcNAc...) asparagine glycosylation occurs at N73. Residue S228 is the site of GPI-anchor amidated serine attachment. The propeptide occupies 229 to 250 (SAPSWELSYTIMVCSLFLPFLS).

Belongs to the folate receptor family. As to quaternary structure, monomer. Interacts with IZUMO1; the interaction is direct. IZUMO1 and IZUMO1R/JUNO form a complex with 1:1 stoichiometry. Interacts with FCRL3/MAIA; FCRL3/MAIA replaces IZUMO1R/JUNO as IZUMO1 receptor after sperm-egg adhesion, thereby permitting species-specific gamete fusion. Interacts with WDR54. Post-translationally, the protein is rapidly cleaved following fertilization, being only weakly detectable in zona-intact fertilized eggs at telophase II and undetectable at the pronuclear stage. Sheding is probably required to block to polyspermy and ensuring egg fusion with a single sperm. As to expression, expressed in unfertilized oocytes (at protein level).

The protein resides in the cell membrane. It is found in the cell projection. Its subcellular location is the microvillus membrane. Functionally, receptor for IZUMO1 present at the cell surface of oocytes (oolemma), which is essential for species-specific gamete recognition and fertilization. The IZUMO1:IZUMO1R/JUNO interaction is a necessary adhesion event between sperm and egg that is required for fertilization but is not sufficient for cell fusion. The ligand-receptor interaction probably does not act as a membrane 'fusogen'. Does not bind folate. The chain is Sperm-egg fusion protein Juno from Homo sapiens (Human).